Here is a 37-residue protein sequence, read N- to C-terminus: Toxin Bcg III 28.78 (37 aa).

A disulfide bond links Cys-6 and Cys-31.

Its subcellular location is the secreted. The protein localises to the nematocyst. The protein is Toxin Bcg III 28.78 of Bunodosoma cangicum (Sea anemone).